Consider the following 757-residue polypeptide: MDVNPTLLFLKVPAQNAISTTFPYTGDPPYSHGTGTGYTMDTVNRTHQYSEKGKWTTNTETGAPQLNPIDGPLPEDNEPSGYAQTDCVLEAMAFLEESHPGIFENSCLETMEVVQQTRVDKLTQGRQTYDWTLNRNQPAATALANTIEVFRSNGLTANESGRLIDFLKDVMESMDKEEMEITTHFQRKRRVRDNMTKKMVTQRTIGKKKQRLNKRSYLIRALTLNTMTKDAERGKLKRRAIATPGMQIRGFVYFVETLARSICEKLEQSGLPVGGNEKKAKLANVVRKMMTNSQDTELSFTITGDNTKWNENQNPRMFLAMITYITRNQPEWFRNVLSIAPIMFSNKMARLGKGYMFESKSMKLRTQIPAEMLANIDLKYFNESTRKKIEKIRPLLIDGTASLSPGMMMGMFNMLSTVLGVSILNLGQKRYTKTTYWWDGLQSSDDFALIVNAPNHEGIQAGVDRFYRTCKLVGINMSKKKSYINRTGTFEFTSFFYRYGFVANFSMELPSFGVSGINESADMSIGVTVIKNNMINNDLGPATAQMALQLFIKDYRYTYRCHRGDTQIQTRRSFELKKLWEQTRSKAGLLVSDGGPNLYNIRNLHIPEVCLKWELMDEDYQGRLCNPLNPFVSHKEIESVNNAVVMPAHGPAKNMEYDAVATTHSWIPKRNRSILNTSQRGILEDEQMYQKCCNLFEKFFPSSSYRRPVGISSMVEAMVSRARIDARIDFESGRIKKEEFAEIMKICSTIEELRRQK.

The tract at residues 50 to 82 is disordered; the sequence is SEKGKWTTNTETGAPQLNPIDGPLPEDNEPSGY. Polar residues predominate over residues 55–64; that stretch reads WTTNTETGAP. 2 short sequence motifs (nuclear localization signal) span residues 187–195 and 203–216; these read RKRRVRDNM and RTIG…NKRS. The promoter-binding site stretch occupies residues 249 to 256; it reads RGFVYFVE. The region spanning 286 to 483 is the RdRp catalytic domain; sequence VRKMMTNSQD…GINMSKKKSY (198 aa).

It belongs to the influenza viruses polymerase PB1 family. As to quaternary structure, influenza RNA polymerase is composed of three subunits: PB1, PB2 and PA. Interacts (via N-terminus) with PA (via C-terminus). Interacts (via C-terminus) with PB2 (via N-terminus); this interaction is essential for transcription initiation. Phosphorylated by host PRKCA.

It localises to the host nucleus. Its subcellular location is the host cytoplasm. The catalysed reaction is RNA(n) + a ribonucleoside 5'-triphosphate = RNA(n+1) + diphosphate. RNA-dependent RNA polymerase which is responsible for replication and transcription of virus RNA segments. The transcription of viral mRNAs occurs by a unique mechanism called cap-snatching. 5' methylated caps of cellular mRNAs are cleaved after 10-13 nucleotides by PA. In turn, these short capped RNAs are used as primers by PB1 for transcription of viral mRNAs. During virus replication, PB1 initiates RNA synthesis and copy vRNA into complementary RNA (cRNA) which in turn serves as a template for the production of more vRNAs. The chain is RNA-directed RNA polymerase catalytic subunit from Influenza A virus (strain A/Turkey/Minnesota/833/1980 H4N2).